We begin with the raw amino-acid sequence, 441 residues long: Tubulin alpha chain (441 aa).

GTP is bound by residues Gln11, Glu68, Ser137, Gly141, Thr142, Thr176, Asn203, and Asn224. Glu68 contributes to the Mg(2+) binding site. Residue Glu250 is part of the active site.

It belongs to the tubulin family. Dimer of alpha and beta chains. A typical microtubule is a hollow water-filled tube with an outer diameter of 25 nm and an inner diameter of 15 nM. Alpha-beta heterodimers associate head-to-tail to form protofilaments running lengthwise along the microtubule wall with the beta-tubulin subunit facing the microtubule plus end conferring a structural polarity. Microtubules usually have 13 protofilaments but different protofilament numbers can be found in some organisms and specialized cells. Requires Mg(2+) as cofactor.

It localises to the cytoplasm. It is found in the cytoskeleton. It carries out the reaction GTP + H2O = GDP + phosphate + H(+). Its function is as follows. Tubulin is the major constituent of microtubules, a cylinder consisting of laterally associated linear protofilaments composed of alpha- and beta-tubulin heterodimers. Microtubules grow by the addition of GTP-tubulin dimers to the microtubule end, where a stabilizing cap forms. Below the cap, tubulin dimers are in GDP-bound state, owing to GTPase activity of alpha-tubulin. This chain is Tubulin alpha chain (TUB1), found in Encephalitozoon cuniculi (strain GB-M1) (Microsporidian parasite).